The primary structure comprises 333 residues: Isopenicillin N synthase (333 aa).

Isopenicillin N is bound by residues arginine 87, tyrosine 91, and tyrosine 191. Arginine 87, tyrosine 91, tyrosine 191, histidine 216, and aspartate 218 together coordinate N-[(5S)-5-amino-5-carboxypentanoyl]-L-cysteinyl-D-valine. The 111-residue stretch at 180–290 (DTLSCRSLMI…RLSLPFFLHA (111 aa)) folds into the Fe2OG dioxygenase domain. 3 residues coordinate Fe(2+): histidine 216, aspartate 218, and histidine 272. Arginine 281 serves as a coordination point for 2-oxoglutarate. Residue serine 283 coordinates isopenicillin N. Serine 283 contributes to the N-[(5S)-5-amino-5-carboxypentanoyl]-L-cysteinyl-D-valine binding site.

Belongs to the iron/ascorbate-dependent oxidoreductase family. Fe cation is required as a cofactor. L-ascorbate serves as cofactor.

The catalysed reaction is N-[(5S)-5-amino-5-carboxypentanoyl]-L-cysteinyl-D-valine + O2 = isopenicillin N + 2 H2O. Its pathway is antibiotic biosynthesis; penicillin G biosynthesis; penicillin G from L-alpha-aminoadipate and L-cysteine and L-valine: step 2/3. Removes, in the presence of oxygen, 4 hydrogen atoms from delta-L-(alpha-aminoadipyl)-L-cysteinyl-D-valine (ACV) to form the azetidinone and thiazolidine rings of isopenicillin. This chain is Isopenicillin N synthase (pcbC), found in Streptomyces microflavus (Streptomyces lipmanii).